The sequence spans 92 residues: MARSLKKNPFVANHSLRKIKNLNIKEEKKIIVTWSRASVIVPAMIGHTIAVHNGREHLPIYVTDRMVDHKLGEFAPTLLFQGHARNDKKSRR.

The protein belongs to the universal ribosomal protein uS19 family.

It is found in the plastid. It localises to the chloroplast. Its function is as follows. Protein S19 forms a complex with S13 that binds strongly to the 16S ribosomal RNA. The sequence is that of Small ribosomal subunit protein uS19c (rps19) from Pinus thunbergii (Japanese black pine).